The sequence spans 105 residues: Large ribosomal subunit protein eL36 (105 aa).

It belongs to the eukaryotic ribosomal protein eL36 family. As to quaternary structure, component of the large ribosomal subunit.

Its subcellular location is the cytoplasm. It is found in the cytosol. Functionally, component of the large ribosomal subunit. The ribosome is a large ribonucleoprotein complex responsible for the synthesis of proteins in the cell. In Hydrophis hardwickii (Hardwick's spine-bellied seasnake), this protein is Large ribosomal subunit protein eL36 (RPL36).